A 494-amino-acid chain; its full sequence is Glycerol kinase (494 aa).

Thr-13 lines the ADP pocket. Residues Thr-13, Thr-14, and Ser-15 each coordinate ATP. Sn-glycerol 3-phosphate is bound at residue Thr-13. Residue Arg-17 participates in ADP binding. Sn-glycerol 3-phosphate-binding residues include Arg-83, Glu-84, Tyr-135, and Asp-244. Glycerol-binding residues include Arg-83, Glu-84, Tyr-135, Asp-244, and Gln-245. Residues Thr-266 and Gly-309 each contribute to the ADP site. Thr-266, Gly-309, Gln-313, and Gly-410 together coordinate ATP. ADP contacts are provided by Gly-410 and Asn-414.

This sequence belongs to the FGGY kinase family.

The enzyme catalyses glycerol + ATP = sn-glycerol 3-phosphate + ADP + H(+). It participates in polyol metabolism; glycerol degradation via glycerol kinase pathway; sn-glycerol 3-phosphate from glycerol: step 1/1. Its activity is regulated as follows. Inhibited by fructose 1,6-bisphosphate (FBP). Key enzyme in the regulation of glycerol uptake and metabolism. Catalyzes the phosphorylation of glycerol to yield sn-glycerol 3-phosphate. In Shewanella putrefaciens (strain CN-32 / ATCC BAA-453), this protein is Glycerol kinase.